The following is a 158-amino-acid chain: uncharacterized protein (158 aa).

A signal peptide spans 1–16 (MFRPILILTILSCVLA). Asn-122 carries N-linked (GlcNAc...) asparagine glycosylation.

This is an uncharacterized protein from Caenorhabditis elegans.